The primary structure comprises 62 residues: Teretoxin Tsu1.1 (62 aa).

An N-terminal signal peptide occupies residues 1 to 21 (MSCFPVLFVMMLLASQSVWAF). Residues 22–40 (PEPETRIGTARDAESMGVR) constitute a propeptide that is removed on maturation.

The protein belongs to the teretoxin A (TA) superfamily. Post-translationally, contains 2 disulfide bonds. In terms of tissue distribution, expressed by the venom duct.

It is found in the secreted. In Terebra subulata (Chocolate spotted auger), this protein is Teretoxin Tsu1.1.